The primary structure comprises 175 residues: E1B protein, small T-antigen (175 aa).

Residues 153–175 (LAEEDEDEEGTTLTTEAEQESSA) form a disordered region.

The protein belongs to the adenoviridae E1B 19 kDa protein family.

This chain is E1B protein, small T-antigen, found in Mus musculus (Mouse).